Consider the following 234-residue polypeptide: Segregation and condensation protein A (234 aa).

The protein belongs to the ScpA family. In terms of assembly, component of a cohesin-like complex composed of ScpA, ScpB and the Smc homodimer, in which ScpA and ScpB bind to the head domain of Smc. The presence of the three proteins is required for the association of the complex with DNA.

It is found in the cytoplasm. Participates in chromosomal partition during cell division. May act via the formation of a condensin-like complex containing Smc and ScpB that pull DNA away from mid-cell into both cell halves. This is Segregation and condensation protein A from Streptococcus pyogenes serotype M12 (strain MGAS2096).